A 961-amino-acid chain; its full sequence is Valine--tRNA ligase (961 aa).

Residues 48–58 (PNVTGSLHMGH) carry the 'HIGH' region motif. Residues 560-564 (KMSKS) carry the 'KMSKS' region motif. K563 is a binding site for ATP. Residues 892-961 (FINKDTELAR…QAQFKAIEAL (70 aa)) adopt a coiled-coil conformation.

Belongs to the class-I aminoacyl-tRNA synthetase family. ValS type 1 subfamily. In terms of assembly, monomer.

It is found in the cytoplasm. The catalysed reaction is tRNA(Val) + L-valine + ATP = L-valyl-tRNA(Val) + AMP + diphosphate. Its function is as follows. Catalyzes the attachment of valine to tRNA(Val). As ValRS can inadvertently accommodate and process structurally similar amino acids such as threonine, to avoid such errors, it has a 'posttransfer' editing activity that hydrolyzes mischarged Thr-tRNA(Val) in a tRNA-dependent manner. This is Valine--tRNA ligase from Haemophilus ducreyi (strain 35000HP / ATCC 700724).